The chain runs to 226 residues: Cytidylate kinase (226 aa).

Residue 12-20 participates in ATP binding; sequence GPSGAGKGT.

The protein belongs to the cytidylate kinase family. Type 1 subfamily.

The protein resides in the cytoplasm. It carries out the reaction CMP + ATP = CDP + ADP. The enzyme catalyses dCMP + ATP = dCDP + ADP. The protein is Cytidylate kinase of Colwellia psychrerythraea (strain 34H / ATCC BAA-681) (Vibrio psychroerythus).